The sequence spans 249 residues: MSVFAGRYAGRCAIVTGGASGLGKQVAARIIAEGGAVALWDLNGDALAATQAEIDATHVVALDVSDHAAVAAAAKDSAAALGKVDILICSAGITGATVPVWEFPVDSFQRVIDINLNGLFYCNREVVPFMLENGYGRIVNLASVAGKEGNPNASAYSASKAGVIGFTKSLGKELAGKGVIANALTPATFESPILDQLPQSQVDYMRSKIPMGRLGLVEESAAMVCFMASEECSFTTASTFDTSGGRTTF.

The Proton acceptor role is filled by tyrosine 156.

Belongs to the short-chain dehydrogenases/reductases (SDR) family. As to quaternary structure, homotetramer.

It carries out the reaction 2-dehydro-3-deoxy-L-rhamnonate + NAD(+) = 2,4-didehydro-3-deoxy-L-rhamnonate + NADH + H(+). It participates in carbohydrate degradation; L-rhamnose degradation. Functionally, catalyzes the NAD(+)-dependent dehydrogenation of 2-dehydro-3-deoxy-L-rhamnonate to form 2,4-didehydro-3-deoxy-L-rhamnonate. Does not show any detectable activity in the presence of NADP(+). Catalyzes the fourth step in an alternative pathway for rhamnose utilization that does not involve phosphorylated intermediates. The chain is 2-dehydro-3-deoxy-L-rhamnonate dehydrogenase (NAD(+)) from Sphingomonas sp. (strain SKA58).